The sequence spans 568 residues: Pyruvate carboxylase subunit B (568 aa).

The 261-residue stretch at 4–264 (IKVVETAFRD…DTGLDLEILK (261 aa)) folds into the Pyruvate carboxyltransferase domain. Residues 12 to 16 (RDAHQ) and R83 contribute to the substrate site. D13 is an a divalent metal cation binding site. Positions 174, 203, and 205 each coordinate a divalent metal cation. K174 is modified (N6-carboxylysine). Residue T339 participates in substrate binding. A Biotinyl-binding domain is found at 493–568 (PEPVDVEGAV…ETGDIIMVIK (76 aa)). The residue at position 534 (K534) is an N6-biotinyllysine.

As to quaternary structure, heterooctamer of four A and four B subunits. It depends on Mg(2+) as a cofactor. Requires Mn(2+) as cofactor. Co(2+) is required as a cofactor.

The catalysed reaction is hydrogencarbonate + pyruvate + ATP = oxaloacetate + ADP + phosphate + H(+). Inhibited by ADP and alpha-ketoglutarate. Functionally, pyruvate carboxylase catalyzes a 2-step reaction, involving the ATP-dependent carboxylation of the covalently attached biotin in the first step and the transfer of the carboxyl group to pyruvate in the second. This chain is Pyruvate carboxylase subunit B (pycB), found in Methanothermobacter thermautotrophicus (strain ATCC 29096 / DSM 1053 / JCM 10044 / NBRC 100330 / Delta H) (Methanobacterium thermoautotrophicum).